A 118-amino-acid polypeptide reads, in one-letter code: MARIAGVNIPDNKHTEVSLTYIYGIGRTTSRGLCERTGISPQAKVKDLSEEQLDVLRNEIAKMVVEGDLRREVQMNIKRLKDLGCYRGLRHRHSLPVRGQRTKTNARTRKGPRKPIRK.

The tract at residues 91–118 (HRHSLPVRGQRTKTNARTRKGPRKPIRK) is disordered.

It belongs to the universal ribosomal protein uS13 family. As to quaternary structure, part of the 30S ribosomal subunit. Forms a loose heterodimer with protein S19. Forms two bridges to the 50S subunit in the 70S ribosome.

In terms of biological role, located at the top of the head of the 30S subunit, it contacts several helices of the 16S rRNA. In the 70S ribosome it contacts the 23S rRNA (bridge B1a) and protein L5 of the 50S subunit (bridge B1b), connecting the 2 subunits; these bridges are implicated in subunit movement. Contacts the tRNAs in the A and P-sites. This Hahella chejuensis (strain KCTC 2396) protein is Small ribosomal subunit protein uS13.